A 343-amino-acid chain; its full sequence is Vancomycin/teicoplanin A-type resistance protein VanA (343 aa).

ATP-binding positions include Lys133, 169 to 171 (FVK), 177 to 178 (SS), 207 to 214 (EQAVSGCE), and Phe241. An ATP-grasp domain is found at 137–338 (YIVAKNAGIA…LPELIDRLIV (202 aa)). Residue His244 participates in substrate binding. 304-305 (NE) provides a ligand contact to ATP. 2 residues coordinate Mg(2+): Glu305 and Asn307.

This sequence belongs to the D-alanine--D-alanine ligase family. Mg(2+) serves as cofactor. Requires Mn(2+) as cofactor.

Its subcellular location is the cell membrane. The enzyme catalyses (R)-lactate + D-alanine + ATP = D-alanyl-(R)-lactate + ADP + phosphate. In terms of biological role, required for high-level resistance to glycopeptide antibiotics. D-Ala--D-Ala ligase of altered specificity which catalyzes ester bond formation between D-Ala and various D-hydroxy acids; produces a peptidoglycan which does not terminate in D-alanine but in D-lactate, thus preventing vancomycin or teicoplanin binding. In Enterococcus faecium (Streptococcus faecium), this protein is Vancomycin/teicoplanin A-type resistance protein VanA (vanA).